A 203-amino-acid polypeptide reads, in one-letter code: Elongation factor Ts (203 aa).

The tract at residues 80-83 (TDFV) is involved in Mg(2+) ion dislocation from EF-Tu.

Belongs to the EF-Ts family.

It localises to the cytoplasm. Functionally, associates with the EF-Tu.GDP complex and induces the exchange of GDP to GTP. It remains bound to the aminoacyl-tRNA.EF-Tu.GTP complex up to the GTP hydrolysis stage on the ribosome. This chain is Elongation factor Ts, found in Moorella thermoacetica (strain ATCC 39073 / JCM 9320).